We begin with the raw amino-acid sequence, 187 residues long: Rusticyanin (187 aa).

An N-terminal signal peptide occupies residues 1–32 (MYTQNTMKKNWYVTVGAAAALAATVGMGTAMA). The Plastocyanin-like domain occupies 85–187 (SFEVHDKKNP…TGMFGKIVVK (103 aa)). The Cu cation site is built by His-117, Cys-170, His-175, and Met-180.

Monomer. Cu cation is required as a cofactor.

Its subcellular location is the periplasm. Electron carrier from cytochrome c552 to the A-type oxidase. The polypeptide is Rusticyanin (rus) (Acidithiobacillus ferrooxidans (strain ATCC 23270 / DSM 14882 / CIP 104768 / NCIMB 8455) (Ferrobacillus ferrooxidans (strain ATCC 23270))).